The sequence spans 437 residues: Bystin (437 aa).

The interval 1 to 105 (MPKFKAARGV…DGSDDEDEEW (105 aa)) is disordered. An Omega-N-methylarginine modification is found at arginine 40. The residue at position 55 (serine 55) is a Phosphoserine. Residues 71-87 (AEHGTGDKPAAPRERTT) show a composition bias toward basic and acidic residues. A Phosphoserine modification is found at serine 98. A Phosphothreonine modification is found at threonine 156. Phosphoserine is present on residues serine 167 and serine 414.

The protein belongs to the bystin family. Binds trophinin, tastin and cytokeratins. Found in the placenta from the sixth week of pregnancy. Was localized in the cytoplasm of the syncytiotrophoblast in the chorionic villi and in endometrial decidual cells at the uteroplacental interface. After week 10, the level decreased and then disappeared from placental villi.

The protein resides in the cytoplasm. Its subcellular location is the nucleus. It localises to the nucleolus. Required for processing of 20S pre-rRNA precursor and biogenesis of 40S ribosomal subunits. May be required for trophinin-dependent regulation of cell adhesion during implantation of human embryos. This is Bystin from Homo sapiens (Human).